The primary structure comprises 284 residues: Proteasome subunit beta (284 aa).

Positions 1–56 (MSPMESSSTRFPGQALPAAYLTPGSSSFTDFLRVAAPELMPGSRPVPDGAVEAPHG) are cleaved as a propeptide — removed in mature form; by autocatalysis. The active-site Nucleophile is T57.

Belongs to the peptidase T1B family. As to quaternary structure, the 20S proteasome core is composed of 14 alpha and 14 beta subunits that assemble into four stacked heptameric rings, resulting in a barrel-shaped structure. The two inner rings, each composed of seven catalytic beta subunits, are sandwiched by two outer rings, each composed of seven alpha subunits. The catalytic chamber with the active sites is on the inside of the barrel. Has a gated structure, the ends of the cylinder being occluded by the N-termini of the alpha-subunits. Is capped by the proteasome-associated ATPase, ARC.

It localises to the cytoplasm. The enzyme catalyses Cleavage of peptide bonds with very broad specificity.. The protein operates within protein degradation; proteasomal Pup-dependent pathway. Its activity is regulated as follows. The formation of the proteasomal ATPase ARC-20S proteasome complex, likely via the docking of the C-termini of ARC into the intersubunit pockets in the alpha-rings, may trigger opening of the gate for substrate entry. Interconversion between the open-gate and close-gate conformations leads to a dynamic regulation of the 20S proteasome proteolysis activity. Its function is as follows. Component of the proteasome core, a large protease complex with broad specificity involved in protein degradation. This Saccharopolyspora erythraea (strain ATCC 11635 / DSM 40517 / JCM 4748 / NBRC 13426 / NCIMB 8594 / NRRL 2338) protein is Proteasome subunit beta.